Consider the following 542-residue polypeptide: Putative cysteine ligase BshC (542 aa).

Residues 458–487 are a coiled coil; that stretch reads VAKNAAILQAQIEFLQHALERALLRKHETE.

The protein belongs to the BshC family.

Involved in bacillithiol (BSH) biosynthesis. May catalyze the last step of the pathway, the addition of cysteine to glucosamine malate (GlcN-Mal) to generate BSH. The chain is Putative cysteine ligase BshC from Geobacillus kaustophilus (strain HTA426).